Reading from the N-terminus, the 226-residue chain is Thymidylate kinase (226 aa).

Position 20 to 27 (20 to 27 (GGEGAGKS)) interacts with ATP.

It belongs to the thymidylate kinase family.

The catalysed reaction is dTMP + ATP = dTDP + ADP. In terms of biological role, phosphorylation of dTMP to form dTDP in both de novo and salvage pathways of dTTP synthesis. The chain is Thymidylate kinase from Bradyrhizobium sp. (strain ORS 278).